We begin with the raw amino-acid sequence, 507 residues long: ATP-dependent RNA helicase DDX47 (507 aa).

Positions 1 to 31 (MSETSEDEQTQLQTSDEEEDLGSEEEQEDED) are enriched in acidic residues. The tract at residues 1-58 (MSETSEDEQTQLQTSDEEEDLGSEEEQEDEDNNHKEGDSEAALSGEDDKGSEDDAAEE) is disordered. Residues 61–89 (LTWKDLGLNEALCQACDELKWKAPSKIQR) carry the Q motif motif. In terms of domain architecture, Helicase ATP-binding spans 92–263 (IPVALQGKDV…RASLKDPVKV (172 aa)). 105-112 (AETGSGKT) serves as a coordination point for ATP. The DEAD box signature appears at 211 to 214 (DEAD). Residues 290-434 (YLVHILNELA…LYKCEEDEVM (145 aa)) enclose the Helicase C-terminal domain. Residues 426–453 (YKCEEDEVMALQERVAEAQRTAKLELKD) adopt a coiled-coil conformation. Residues 451-471 (LKDLEDTRGGHKRGGDTHDDS) show a composition bias toward basic and acidic residues. A disordered region spans residues 451–507 (LKDLEDTRGGHKRGGDTHDDSENFTGARKRMKPMGGTGGGGRKSFGKKNWSKGKQKR). Residues 494 to 507 (SFGKKNWSKGKQKR) are compositionally biased toward basic residues.

It belongs to the DEAD box helicase family. DDX47/RRP3 subfamily.

It localises to the nucleus. It is found in the nucleolus. The catalysed reaction is ATP + H2O = ADP + phosphate + H(+). Functionally, part of a translational control module, also containing ath/DHX33 and ais/DDX52, which coordinates germline stem cell differentiation with ribosome biogenesis during oogenesis. This module allows for coregulation of ribosomal proteins and non1/GTPBP4, a p53 repressor, preventing p53 stabilization, cell cycle arrest and loss of stem cell differentiation. With atos, adjusts transcription and translation of a subset of OXPHOS genes in macrophages to increase mitochondrial bioenergetics and allow tissue invasion. This chain is ATP-dependent RNA helicase DDX47, found in Drosophila melanogaster (Fruit fly).